We begin with the raw amino-acid sequence, 889 residues long: Disease resistance protein RPS5 (889 aa).

Residue Gly-2 is the site of N-myristoyl glycine attachment. Cys-4 carries the S-palmitoyl cysteine lipid modification. A coiled-coil region spans residues 29–58; sequence IHNLSKNLASLQKAMRMLKARQYDVIRRLE. The region spanning 140 to 444 is the NB-ARC domain; it reads SEATPFADVD…SEGFINEKEG (305 aa). 183–190 lines the ATP pocket; it reads GMGGVGKT. 6 LRR repeats span residues 518 to 539, 540 to 561, 564 to 586, 588 to 610, 611 to 633, and 634 to 656; these read TVRKISLMNNEIEEIFDSHECA, ALTTLFLQKNDVVKISAEFFRC, HLVVLDLSENQSLNELPEEISEL, SLRYFNLSYTCIHQLPVGLWTLK, KLIHLNLEHMSSLGSILGISNLW, and NLRTLGLRDSRLLLDMSLVKELQ.

It belongs to the disease resistance NB-LRR family. In terms of assembly, in uninfected plants, interacts with PBS1 through the coiled coil domain. Homodimer.

The protein localises to the cell membrane. Functionally, disease resistance (R) protein that specifically recognizes the avrPphB type III effector avirulence protein from Pseudomonas syringae. Also confers resistance against Hyaloperonospora parasitica (downy mildew). Resistance proteins guard the plant against pathogens that contain an appropriate avirulence protein via an indirect interaction with this avirulence protein. That triggers a defense system including the hypersensitive response, which restricts the pathogen growth. Requires PBS1 to trigger the defense reaction against avrPphB. In case of infection by Pseudomonas syringae, AvrPphB triggers RPS5-mediated defense mechanism via the cleavage of PBS1, suggesting that the cleavage of PBS1 could trigger an exchange of ADP for ATP, thereby activating RPS5. May function as a fine-tuned sensor of alterations in the structure of the effector target PBS1. This chain is Disease resistance protein RPS5 (RPS5), found in Arabidopsis thaliana (Mouse-ear cress).